Reading from the N-terminus, the 222-residue chain is Iodotyrosine deiodinase (222 aa).

Residues 34–38 (RRTVR) and 61–62 (PS) contribute to the FMN site. 3-iodo-L-tyrosine is bound by residues glutamate 91, tyrosine 95, and lysine 116. Residues 171–173 (THT) and arginine 212 each bind FMN.

This sequence belongs to the nitroreductase family. As to quaternary structure, homodimer. It depends on FMN as a cofactor.

It catalyses the reaction 2 iodide + L-tyrosine + 2 NADP(+) = 3,5-diiodo-L-tyrosine + 2 NADPH + H(+). The catalysed reaction is iodide + L-tyrosine + NADP(+) = 3-iodo-L-tyrosine + NADPH. The enzyme catalyses 3-iodo-L-tyrosine + iodide + NADP(+) = 3,5-diiodo-L-tyrosine + NADPH + H(+). It carries out the reaction L-tyrosine + chloride + NADP(+) = 3-chloro-L-tyrosine + NADPH. It catalyses the reaction bromide + L-tyrosine + NADP(+) = 3-bromo-L-tyrosine + NADPH. In terms of biological role, catalyzes the dehalogenation of halotyrosines such as 3-iodo-L-tyrosine and 3,5-diiodo-L-tyrosine. Likely to also catalyze the dehalogenation of other halotyrosines such as 3-bromo-L-tyrosine, 3-chloro-L-tyrosine and 3-iodo-L-tyrosine. Activity towards 3-iodo-L-tyrosine is much stronger than activity towards 3,5-diiodo-L-tyrosine and 2-iodophenol. This chain is Iodotyrosine deiodinase, found in Haliscomenobacter hydrossis (strain ATCC 27775 / DSM 1100 / LMG 10767 / O).